A 375-amino-acid chain; its full sequence is Naringenin 7-O-methyltransferase (375 aa).

A substrate-binding site is contributed by 136-142 (LNLDKVF). Residues 168–188 (LFQYLGQDGNEPSNTLFNQAM) are substrate binding. Residues Gly-219, Asp-242, Met-263, and Lys-276 each coordinate S-adenosyl-L-methionine. The active-site Proton acceptor is His-280.

The protein belongs to the class I-like SAM-binding methyltransferase superfamily. Cation-independent O-methyltransferase family. COMT subfamily.

The catalysed reaction is (2S)-naringenin + S-adenosyl-L-methionine = (2S)-sakuranetin + S-adenosyl-L-homocysteine + H(+). Its function is as follows. S-adenosyl-L-methionine-dependent methyltransferase involved in the biosynthesis of the sakuranetin, an inducible defense mechanism of O.sativa against pathogen attack. This Oryza sativa subsp. japonica (Rice) protein is Naringenin 7-O-methyltransferase.